A 296-amino-acid polypeptide reads, in one-letter code: Protoheme IX farnesyltransferase 2 (296 aa).

A run of 9 helical transmembrane segments spans residues 7–27 (LLVAKPGIIFGNLIAVAGGYF), 36–56 (PMLLLATVIGLSLVVASGCVL), 83–103 (LKAALAHGLVLGVAGFGLLWW), 108–128 (LTTALAGFGYFVYVGLYSLWF), 134–154 (YGTLVGSLSGAMPPVVGYCAV), 163–183 (ASLLAIFCLWQMPHSYAIAIF), 207–227 (IHIVLYILAFMAATLALCLGG), 229–249 (AGYGYLLVAVAVSLWWLAIAL), and 265–285 (FAFSIVAITALSVMMSIDFQV).

Belongs to the UbiA prenyltransferase family. Protoheme IX farnesyltransferase subfamily.

It localises to the cell inner membrane. The enzyme catalyses heme b + (2E,6E)-farnesyl diphosphate + H2O = Fe(II)-heme o + diphosphate. Its pathway is porphyrin-containing compound metabolism; heme O biosynthesis; heme O from protoheme: step 1/1. Functionally, converts heme B (protoheme IX) to heme O by substitution of the vinyl group on carbon 2 of heme B porphyrin ring with a hydroxyethyl farnesyl side group. This is Protoheme IX farnesyltransferase 2 from Pseudomonas paraeruginosa (strain DSM 24068 / PA7) (Pseudomonas aeruginosa (strain PA7)).